The chain runs to 641 residues: E3 ubiquitin-protein ligase TRIM47 (641 aa).

An RING-type zinc finger spans residues 9-58 (CPICLEPLREPVTLPCGHNFCLACLGALWPHRSAGGTGGSGGPARCPLCQ). Threonine 72 carries the phosphothreonine modification. The tract at residues 81-123 (QGSVPGPMSAPASGSTRGATPEPSAPSAPPPAPEPSAPCAPEQ) is disordered. The segment covering 103–118 (PSAPSAPPPAPEPSAP) has biased composition (pro residues). The B box-type zinc finger occupies 181–221 (LEESLCPRHLRPLERYCRVERVCLCEACATQDHRGHELVPL). Positions 186, 189, 208, and 213 each coordinate Zn(2+). The stretch at 305-325 (QGDLRRQEEQRSRLSKARHNL) forms a coiled coil. Serine 393 carries the post-translational modification Phosphoserine. The interval 396 to 416 (DGLQKLGSEDVESQDPDSTSL) is disordered. The B30.2/SPRY domain maps to 413-634 (STSLLESEAP…LQIGPLKKSC (222 aa)). A Phosphoserine modification is found at serine 464. Arginine 585 carries the post-translational modification Omega-N-methylarginine. Residue serine 591 is modified to Phosphoserine.

It belongs to the TRIM/RBCC family. As to expression, expressed in hepatocytes, expression is increased in fatty livers.

It is found in the cytoplasm. It localises to the nucleus. The catalysed reaction is S-ubiquitinyl-[E2 ubiquitin-conjugating enzyme]-L-cysteine + [acceptor protein]-L-lysine = [E2 ubiquitin-conjugating enzyme]-L-cysteine + N(6)-ubiquitinyl-[acceptor protein]-L-lysine.. It functions in the pathway protein modification; protein ubiquitination. Its function is as follows. E3 ubiquitin-protein ligase that mediates the ubiquitination and proteasomal degradation of CYLD. The sequence is that of E3 ubiquitin-protein ligase TRIM47 from Mus musculus (Mouse).